The sequence spans 274 residues: NADPH-dependent 7-cyano-7-deazaguanine reductase (274 aa).

80–82 (VES) is a substrate binding site. 82–83 (SK) contacts NADPH. Catalysis depends on Cys-181, which acts as the Thioimide intermediate. Asp-188 acts as the Proton donor in catalysis. Residue 220–221 (HE) coordinates substrate. 249 to 250 (RG) contacts NADPH.

This sequence belongs to the GTP cyclohydrolase I family. QueF type 2 subfamily. Homodimer.

The protein localises to the cytoplasm. It catalyses the reaction 7-aminomethyl-7-carbaguanine + 2 NADP(+) = 7-cyano-7-deazaguanine + 2 NADPH + 3 H(+). Its pathway is tRNA modification; tRNA-queuosine biosynthesis. Catalyzes the NADPH-dependent reduction of 7-cyano-7-deazaguanine (preQ0) to 7-aminomethyl-7-deazaguanine (preQ1). In Burkholderia thailandensis (strain ATCC 700388 / DSM 13276 / CCUG 48851 / CIP 106301 / E264), this protein is NADPH-dependent 7-cyano-7-deazaguanine reductase.